A 301-amino-acid chain; its full sequence is MKIAVLSRNPRLYSTRRLVEAGIQRGHEMVVIDTLRAYMNIASHKPQIHYRGKPLEGFDAVIPRIGASVTFYGCAVLRQFEMMGVYPLNESVAIARSRDKLRSLQLLSRRGIGLPITGFAHSPDDIPDLIQMVNGAPLVIKVLEGTQGIGVVLCETTQAAESVIEAFMGLKQNIMVQEYIKEAGGADIRCFVVGDKVIASMKRQAKPGEFRSNLHRGGVASLIKITPEERITAIRAAKVMGLSVAGVDILRSNHGPLVMEVNSSPGLEGIEVTTGKNVAGMIIEHLEKNGGPNQTRTKGKG.

The 184-residue stretch at 104-287 folds into the ATP-grasp domain; sequence LQLLSRRGIG…VAGMIIEHLE (184 aa). ATP is bound by residues Lys141, 178-179, Asp187, and 211-213; these read EY and RSN. Asp248, Glu260, and Asn262 together coordinate Mg(2+). Mn(2+) is bound by residues Asp248, Glu260, and Asn262.

Belongs to the RimK family. Requires Mg(2+) as cofactor. Mn(2+) serves as cofactor.

The polypeptide is Probable alpha-L-glutamate ligase (Pseudomonas putida (strain GB-1)).